Reading from the N-terminus, the 483-residue chain is Argininosuccinate lyase (483 aa).

It belongs to the lyase 1 family. Argininosuccinate lyase subfamily.

The protein localises to the cytoplasm. It catalyses the reaction 2-(N(omega)-L-arginino)succinate = fumarate + L-arginine. The protein operates within amino-acid biosynthesis; L-arginine biosynthesis; L-arginine from L-ornithine and carbamoyl phosphate: step 3/3. This is Argininosuccinate lyase from Albidiferax ferrireducens (strain ATCC BAA-621 / DSM 15236 / T118) (Rhodoferax ferrireducens).